The chain runs to 424 residues: Probable carboxypeptidase AN5749 (424 aa).

Residues 1–17 (MNLSILAALALVSFSTA) form the signal peptide. Asn-58 carries an N-linked (GlcNAc...) asparagine glycan. Asp-139 provides a ligand contact to Zn(2+). Glu-171 acts as the Proton acceptor in catalysis. Zn(2+) is bound at residue Glu-172. 2 N-linked (GlcNAc...) asparagine glycosylation sites follow: Asn-184 and Asn-323.

Belongs to the peptidase M20A family. Requires Zn(2+) as cofactor.

The protein resides in the secreted. The protein is Probable carboxypeptidase AN5749 of Emericella nidulans (strain FGSC A4 / ATCC 38163 / CBS 112.46 / NRRL 194 / M139) (Aspergillus nidulans).